The following is a 1255-amino-acid chain: Kinesin-related protein 7 (1255 aa).

The disordered stretch occupies residues 1 to 26; that stretch reads MESPVVEGNSGEVATPTLPQPPTPVS. One can recognise a Kinesin motor domain in the interval 28 to 349; that stretch reads NIRVVCRVRP…LQFGTRAKTI (322 aa). 107 to 114 contacts ATP; it reads GQTASGKT. 3 stretches are compositionally biased toward low complexity: residues 454–491, 545–563, and 583–603; these read NNNN…QQEN, NNNN…DSDG, and HNIN…NSNS. Disordered regions lie at residues 454–503, 530–564, 579–628, 661–686, 795–864, and 915–934; these read NNNN…NSSF, GNIS…SDGY, DLND…MDVN, ENEQ…SNAT, EEGS…TKSI, and ISIK…TSIK. Residues 608–628 show a composition bias toward polar residues; the sequence is VSTSYITSSPNLSPSKSMDVN. A compositionally biased stretch (acidic residues) spans 813 to 834; that stretch reads GDDDDEENEDNENEDVIVDSDE. Positions 915–932 are enriched in low complexity; that stretch reads ISIKSNKEPSPSSSTTTS. The chain crosses the membrane as a helical span at residues 945–965; that stretch reads IIFTIILTITLVSSSLLCLYL. Positions 1088–1223 form a coiled coil; sequence NYITKIDQLS…QELEDAPIAL (136 aa).

It belongs to the TRAFAC class myosin-kinesin ATPase superfamily. Kinesin family.

It localises to the nucleus membrane. The protein localises to the cytoplasm. It is found in the cytoskeleton. In terms of biological role, microtubule-associated force-producing protein that plays a role in organelle transport. Its motor activity is directed toward the microtubule's plus end. May be involved in cell motility or cell differentiation during prestalk formation. The polypeptide is Kinesin-related protein 7 (kif7) (Dictyostelium discoideum (Social amoeba)).